Consider the following 481-residue polypeptide: Surface lipoprotein assembly modifier 1 (481 aa).

Residues 1–23 (MSIQTKFILFLSSSLFLTPYSVA) form the signal peptide. The segment at 25 to 192 (EKSPQPHDGR…QYLSALNQRD (168 aa)) is N-terminal domain. Positions 193–481 (QWKIQGGFSF…RIYVEISKTF (289 aa)) are C-terminal probable beta barrel. A run of 14 beta stranded transmembrane segments spans residues 194–204 (WKIQGGFSFLN), 233–243 (SYFGNAEKKWS), 248–258 (HFTKLSLEGSG), 271–281 (NARAGVGLGYQ), 285–295 (FELSLMPFTEK), 315–325 (SGARLDLSNWL), 329–338 (WQISTALEYG), 353–363 (YLASATLLYLA), 368–377 (YWFGGADYNR), 390–400 (KNVRLGWGQEW), 405–414 (STRLILNYAR), 432–441 (YASVLTIWHR), 448–458 (ITPKLSWSYQK), and 471–481 (NRIYVEISKTF).

The protein belongs to the Slam family.

The protein localises to the cell outer membrane. In terms of biological role, required for correct export to the cell surface of some cell outer membrane lipoproteins. The protein is Surface lipoprotein assembly modifier 1 of Haemophilus influenzae (strain ATCC 51907 / DSM 11121 / KW20 / Rd).